The sequence spans 153 residues: HTH-type transcriptional regulator Zrp (153 aa).

One can recognise an HTH asnC-type domain in the interval 2–63 (IDYRDRHILS…LLDRKKINLP (62 aa)). The segment at residues 21 to 40 (LAEIAERVALSVSACSRRVA) is a DNA-binding region (H-T-H motif).

In Zymomonas mobilis subsp. mobilis (strain ATCC 10988 / DSM 424 / LMG 404 / NCIMB 8938 / NRRL B-806 / ZM1), this protein is HTH-type transcriptional regulator Zrp (zrp).